Consider the following 75-residue polypeptide: Metallothionein-like protein 1 (75 aa).

The protein belongs to the metallothionein superfamily. Type 15 family.

Its function is as follows. Metallothioneins have a high content of cysteine residues that bind various heavy metals. This chain is Metallothionein-like protein 1 (MTA), found in Pisum sativum (Garden pea).